Reading from the N-terminus, the 393-residue chain is Probable protein phosphatase 2C 72 (393 aa).

Positions 49–357 (EFSMAVVQAN…DDITVVVVFF (309 aa)) constitute a PPM-type phosphatase domain. Positions 88 and 89 each coordinate Mn(2+). Residues 147-167 (LAAVGSCCLVGVICAGNLYIA) form a helical membrane-spanning segment. Mn(2+) contacts are provided by aspartate 289 and aspartate 348.

This sequence belongs to the PP2C family. Requires Mg(2+) as cofactor. Mn(2+) is required as a cofactor.

The protein resides in the membrane. The catalysed reaction is O-phospho-L-seryl-[protein] + H2O = L-seryl-[protein] + phosphate. The enzyme catalyses O-phospho-L-threonyl-[protein] + H2O = L-threonyl-[protein] + phosphate. This is Probable protein phosphatase 2C 72 from Oryza sativa subsp. japonica (Rice).